A 360-amino-acid polypeptide reads, in one-letter code: MKPSIVAKLEALHERHEEVQALLGDAGIIADQDRFRALSREYAQLSDVSRCFTDWQQVQDDIETAQMMLDDPEMREMAQEELREAKEKSEQLEQQLQVLLLPKDPDDERNAFLEVRAGTGGDEAALFAGDLFRMYSRYAEARRWRVEIMSMSEGEHGGYKEIIAKISGDGVYGRLKFESGGHRVQRVPATESQGRIHTSACTVAVMPELPEAELPDINPADLRIDTFRSSGAGGQHVNTTDSAIRITHLPTGIVVECQDERSQHKNKAKALSVLGARIHAAETAKRQQAEASTRRNLLGSGDRSDRNRTYNFPQGRVTDHRINLTLYRLDETMEGKLDMLIEPIVQEHQADLLAALSEQE.

Gln235 is modified (N5-methylglutamine). Residues 284-313 (AKRQQAEASTRRNLLGSGDRSDRNRTYNFP) form a disordered region.

It belongs to the prokaryotic/mitochondrial release factor family. Post-translationally, methylated by PrmC. Methylation increases the termination efficiency of RF1.

The protein localises to the cytoplasm. Functionally, peptide chain release factor 1 directs the termination of translation in response to the peptide chain termination codons UAG and UAA. This is Peptide chain release factor 1 from Salmonella agona (strain SL483).